The sequence spans 120 residues: FK506-binding protein 1B (120 aa).

The segment at 1 to 24 is disordered; it reads MNPPQGVTKTILRPGNGRDSPHTG. The PPIase FKBP-type domain maps to 24–120; that stretch reads GDTVIIDYTG…LVLYVCSPAG (97 aa).

The protein belongs to the FKBP-type PPIase family. FKBP1 subfamily.

It carries out the reaction [protein]-peptidylproline (omega=180) = [protein]-peptidylproline (omega=0). PPIases accelerate the folding of proteins. It catalyzes the cis-trans isomerization of proline imidic peptide bonds in oligopeptides. The chain is FK506-binding protein 1B (FKBP3) from Emericella nidulans (strain FGSC A4 / ATCC 38163 / CBS 112.46 / NRRL 194 / M139) (Aspergillus nidulans).